Here is a 326-residue protein sequence, read N- to C-terminus: ELAV-like protein 1-B (326 aa).

RRM domains follow at residues 20–98 (TNLI…FARP), 106–186 (ANLY…FAAN), and 244–322 (WCIF…FKTS).

The protein belongs to the RRM elav family. As to quaternary structure, interacts (via RRM3) with cirbp. Unable to form oligomers. Part of a ribonucleoprotein (RNP) complex, at least composed of elavl1/elrA and/or elavl2/elrB, igf2bp3/vg1RBP, ddx6/Xp54, ybx2/frgy2, lsm14b/rap55b and, in a subset of RNP complexes, stau1/staufen.

The protein localises to the cytoplasm. Its subcellular location is the cell cortex. Its function is as follows. RNA-binding protein that binds to the 3'-UTR region of mRNAs and increases their stability. Involved in embryonic stem cells (ESCs) differentiation: preferentially binds mRNAs that are not methylated by N6-methyladenosine (m6A), stabilizing them, promoting ESCs differentiation. Binds to poly-U elements and AU-rich elements (AREs) in the 3'-UTR of target mRNAs. Acts cooperatively with cribp to stabilize AU-rich sequence (ARE)-containing mRNAs. May play a role during gastrulation. Required for the vegetal localization of vg1 mRNA. In Xenopus laevis (African clawed frog), this protein is ELAV-like protein 1-B (elavl1-b).